The following is a 969-amino-acid chain: Leucine--tRNA ligase (969 aa).

A 'HIGH' region motif is present at residues 45–55; sequence PYTNAPLHIGH. A 'KMSKS' region motif is present at residues 649–653; sequence KMSKS. Lysine 652 is a binding site for ATP.

It belongs to the class-I aminoacyl-tRNA synthetase family.

Its subcellular location is the cytoplasm. It carries out the reaction tRNA(Leu) + L-leucine + ATP = L-leucyl-tRNA(Leu) + AMP + diphosphate. The protein is Leucine--tRNA ligase of Staphylothermus marinus (strain ATCC 43588 / DSM 3639 / JCM 9404 / F1).